Here is a 418-residue protein sequence, read N- to C-terminus: Glutamyl-tRNA reductase (418 aa).

Substrate is bound by residues 49–52 (TCNR), serine 109, 114–116 (EPQ), and glutamine 120. The Nucleophile role is filled by cysteine 50. 189–194 (GAGETI) is a binding site for NADP(+).

This sequence belongs to the glutamyl-tRNA reductase family. As to quaternary structure, homodimer.

The catalysed reaction is (S)-4-amino-5-oxopentanoate + tRNA(Glu) + NADP(+) = L-glutamyl-tRNA(Glu) + NADPH + H(+). It participates in porphyrin-containing compound metabolism; protoporphyrin-IX biosynthesis; 5-aminolevulinate from L-glutamyl-tRNA(Glu): step 1/2. In terms of biological role, catalyzes the NADPH-dependent reduction of glutamyl-tRNA(Glu) to glutamate 1-semialdehyde (GSA). In Erwinia tasmaniensis (strain DSM 17950 / CFBP 7177 / CIP 109463 / NCPPB 4357 / Et1/99), this protein is Glutamyl-tRNA reductase.